The primary structure comprises 216 residues: Somatotropin (216 aa).

The N-terminal stretch at 1–26 (MAAGPRTSVLLAFTLLCLPWPQEAGA) is a signal peptide. Position 45 (His-45) interacts with Zn(2+). A disulfide bond links Cys-78 and Cys-189. Ser-131 is modified (phosphoserine). Glu-198 is a Zn(2+) binding site. A disulfide bond links Cys-206 and Cys-214.

This sequence belongs to the somatotropin/prolactin family.

Its subcellular location is the secreted. In terms of biological role, plays an important role in growth control. Its major role in stimulating body growth is to stimulate the liver and other tissues to secrete IGF1. It stimulates both the differentiation and proliferation of myoblasts. It also stimulates amino acid uptake and protein synthesis in muscle and other tissues. This is Somatotropin (GH1) from Camelus dromedarius (Dromedary).